Here is a 241-residue protein sequence, read N- to C-terminus: MAVFLQLLPLLLSRAQGNPGASLDGRPGDRVNLSCGGVSHPIRWVWAPSFPACKGLSKGRRPILWASSSGTPTVPPLQPFVGRLRSLDSGIRRLELLLSAGDSGTFFCKGRHEDESRTVLHVLGDRTYCKAPGPTHGSVYPQLLIPLLGAGLVLGLGALGLVWWLHRRLPPQPIRPLPRFAPLVKTEPQRPVKEEEPKIPGDLDQEPSLLYADLDHLALSRPRRLSTADPADASTIYAVVV.

The N-terminal stretch at 1-17 (MAVFLQLLPLLLSRAQG) is a signal peptide. The Extracellular portion of the chain corresponds to 18-142 (NPGASLDGRP…GPTHGSVYPQ (125 aa)). N-linked (GlcNAc...) asparagine glycosylation occurs at asparagine 32. The helical transmembrane segment at 143 to 163 (LLIPLLGAGLVLGLGALGLVW) threads the bilayer. Residues 164–241 (WLHRRLPPQP…DASTIYAVVV (78 aa)) are Cytoplasmic-facing. 2 consecutive short sequence motifs (ITIM motif) follow at residues 209-214 (LLYADL) and 235-240 (TIYAVV). At tyrosine 211 the chain carries Phosphotyrosine.

In terms of assembly, interacts (via ITIM motif) with PTPN6 and PTPN11. Binds to heparin. In terms of processing, all isoforms are N-glycosylated. Post-translationally, isoform E is O-glycosylated. Phosphorylated. Expressed in platelets. Expressed in a restricted set of hematopoietic cell lines including the erythroleukemia cell line K-562 and the T-cell leukemia cell lines MOLT-4 and Jurkat. Not detected in the monocyte-like cell line U-937, the B-cell-like cell line Raji, the fibroblast cell lines TK and HeLa, or the natural killer cell lines NKL, NK 62 and YT.

Its subcellular location is the endoplasmic reticulum. The protein localises to the golgi apparatus. It localises to the cell membrane. Its function is as follows. Inhibitory receptor that acts as a critical regulator of hematopoietic lineage differentiation, megakaryocyte function and platelet production. Inhibits platelet aggregation and activation by agonists such as ADP and collagen-related peptide. This regulation of megakaryocate function as well as platelet production ann activation is done through the inhibition (via the 2 ITIM motifs) of the receptors CLEC1B and GP6:FcRgamma signaling. Appears to operate in a calcium-independent manner. Isoform B, displayed in this entry, is the only isoform to contain both a transmembrane region and 2 immunoreceptor tyrosine-based inhibitor motifs (ITIMs) and, thus, the only one which probably has a role of inhibitory receptor. Isoform A may be the activating counterpart of isoform B. The sequence is that of Megakaryocyte and platelet inhibitory receptor G6b from Homo sapiens (Human).